We begin with the raw amino-acid sequence, 645 residues long: 1-phosphatidylinositol 4,5-bisphosphate phosphodiesterase zeta-1 (645 aa).

One can recognise an EF-hand domain in the interval 42 to 77 (CHFAHVKRIFKENDRHNQGRITTEDFRTIYRCIVHR). One can recognise a PI-PLC X-box domain in the interval 162–306 (QDMNKPLNDY…LKFKILVKNK (145 aa)). Catalysis depends on residues histidine 177 and histidine 222. The region spanning 385-501 (LSDLVIYTKA…GYVLKPDFLR (117 aa)) is the PI-PLC Y-box domain. The 125-residue stretch at 501-625 (RDTTLGFNPN…KGYRRVPLFS (125 aa)) folds into the C2 domain.

Interacts via its C2 domain with PtdIns(3)P and, to a lesser extent, PtdIns(5)P in vitro. It depends on Ca(2+) as a cofactor.

It is found in the nucleus. The protein localises to the cytoplasm. Its subcellular location is the perinuclear region. It carries out the reaction a 1,2-diacyl-sn-glycero-3-phospho-(1D-myo-inositol-4,5-bisphosphate) + H2O = 1D-myo-inositol 1,4,5-trisphosphate + a 1,2-diacyl-sn-glycerol + H(+). In terms of biological role, the production of the second messenger molecules diacylglycerol (DAG) and inositol 1,4,5-trisphosphate (IP3) is mediated by activated phosphatidylinositol-specific phospholipase C enzymes. In vitro, hydrolyzes PtdIns(4,5)P2 in a Ca(2+)-dependent manner. Triggers intracellular Ca(2+) oscillations in oocytes solely during M phase and is involved in inducing oocyte activation and initiating embryonic development up to the blastocyst stage. Is therefore a strong candidate for the egg-activating soluble sperm factor that is transferred from the sperm into the egg cytoplasm following gamete membrane fusion. May exert an inhibitory effect on phospholipase-C-coupled processes that depend on calcium ions and protein kinase C, including CFTR trafficking and function. In Rattus norvegicus (Rat), this protein is 1-phosphatidylinositol 4,5-bisphosphate phosphodiesterase zeta-1.